The following is a 122-amino-acid chain: Large ribosomal subunit protein uL14 (122 aa).

It belongs to the universal ribosomal protein uL14 family. Part of the 50S ribosomal subunit. Forms a cluster with proteins L3 and L19. In the 70S ribosome, L14 and L19 interact and together make contacts with the 16S rRNA in bridges B5 and B8.

Binds to 23S rRNA. Forms part of two intersubunit bridges in the 70S ribosome. The chain is Large ribosomal subunit protein uL14 from Psychrobacter sp. (strain PRwf-1).